The following is a 308-amino-acid chain: Putative T-box protein 30/42 (308 aa).

The T-box DNA-binding region spans 11–192 (MSNEELWKER…KHSTFGNRSE (182 aa)). A disordered region spans residues 186-220 (TFGNRSEGGIKRKTSDAAGQLPSKRSSKKPVKKDV).

The protein localises to the nucleus. Involved in the regulatory network to control embryonic patterning and morphogenesis. Implicated in negatively regulating vab-7 expression at the anterior of embryos. In Caenorhabditis elegans, this protein is Putative T-box protein 30/42 (tbx-30).